We begin with the raw amino-acid sequence, 152 residues long: Superoxide dismutase [Cu-Zn] 5 (152 aa).

Cu cation contacts are provided by His-44, His-46, and His-61. An intrachain disulfide couples Cys-55 to Cys-144. Positions 61, 69, 78, and 81 each coordinate Zn(2+). A Cu cation-binding site is contributed by His-118.

Belongs to the Cu-Zn superoxide dismutase family. Cu cation is required as a cofactor. Zn(2+) serves as cofactor.

The catalysed reaction is 2 superoxide + 2 H(+) = H2O2 + O2. Its function is as follows. Destroys radicals which are normally produced within the cells and which are toxic to biological systems. This is Superoxide dismutase [Cu-Zn] 5 (sodE) from Dictyostelium discoideum (Social amoeba).